A 268-amino-acid chain; its full sequence is Zinc finger protein SNAI2 (268 aa).

The tract at residues 1–20 (MPRSFLVKKHFNASKKPNYS) is SNAG domain. Residues 84–116 (GRVSPLPSSDTSSKDHSGSESPISDEEERLQPK) form a disordered region. 4 C2H2-type zinc fingers span residues 128–150 (FQCNLCNKTYSTFSGLAKHKQLH), 159–181 (FSCKYCDKEYVSLGALKMHIRTH), 185–207 (CVCKICGKAFSRPWLLQGHIRTH), and 213–235 (FSCPHCNRAFADRSNLRAHLQTH). A C2H2-type 5; atypical zinc finger spans residues 241-264 (YQCKNCSKTFSRMSLLHKHEESGC).

Belongs to the snail C2H2-type zinc-finger protein family. Interacts (via SNAG domain) with LIMD1 (via LIM domains), WTIP (via LIM domains) and AJUBA (via LIM domains). Interacts (via zinc fingers) with KPNA2, KPNB1 and TNPO1. May interact (via zinc fingers) with IPO7. Phosphorylated by GSK3B. Once phosphorylated, it becomes a target for ubiquitination. Post-translationally, ubiquitinated by the SCF(FBXO11) complex; ubiquitination requires previous GSK3B-mediated SNAI2 phosphorylation.

Its subcellular location is the nucleus. The protein localises to the cytoplasm. Its function is as follows. Transcriptional repressor that modulates both activator-dependent and basal transcription. Involved in the generation and migration of neural crest cells. Plays a role in mediating RAF1-induced transcriptional repression of the TJ protein, occludin (OCLN) and subsequent oncogenic transformation of epithelial cells. Represses BRCA2 expression by binding to its E2-box-containing silencer and recruiting CTBP1 and HDAC1 in breast cells. In epidermal keratinocytes, binds to the E-box in ITGA3 promoter and represses its transcription. Involved in the regulation of ITGB1 and ITGB4 expression and cell adhesion and proliferation in epidermal keratinocytes. Binds to E-box2 domain of BSG and activates its expression during TGFB1-induced epithelial-mesenchymal transition (EMT) in hepatocytes. Represses E-Cadherin/CDH1 transcription via E-box elements. Involved in osteoblast maturation. Binds to RUNX2 and SOC9 promoters and may act as a positive and negative transcription regulator, respectively, in osteoblasts. Binds to CXCL12 promoter via E-box regions in mesenchymal stem cells and osteoblasts. Plays an essential role in TWIST1-induced EMT and its ability to promote invasion and metastasis. This Rattus norvegicus (Rat) protein is Zinc finger protein SNAI2 (Snai2).